A 248-amino-acid chain; its full sequence is Cobalt transport protein CbiM (248 aa).

A signal peptide spans 1 to 29 (MKRVSVKNYLVCLLIAVCAIFVFPANASA). 6 consecutive transmembrane segments (helical) span residues 40–60 (GWCI…FFSI), 72–92 (TLLA…MPSV), 104–124 (LGAV…ILLF), 136–156 (TLGA…FGVF), 167–187 (GLAV…ITSV), and 210–230 (IFGF…VVIY).

This sequence belongs to the CbiM family. Forms an energy-coupling factor (ECF) transporter complex composed of an ATP-binding protein (A component, CbiO), a transmembrane protein (T component, CbiQ) and 2 possible substrate-capture proteins (S components, CbiM and CbiN) of unknown stoichimetry.

The protein localises to the cell membrane. The protein operates within cofactor biosynthesis; adenosylcobalamin biosynthesis. In terms of biological role, part of the energy-coupling factor (ECF) transporter complex CbiMNOQ involved in cobalt import. This Ruminiclostridium cellulolyticum (strain ATCC 35319 / DSM 5812 / JCM 6584 / H10) (Clostridium cellulolyticum) protein is Cobalt transport protein CbiM.